A 623-amino-acid polypeptide reads, in one-letter code: Glutamine--fructose-6-phosphate aminotransferase [isomerizing] (623 aa).

The active-site Nucleophile; for GATase activity is Cys-2. Residues 2–228 form the Glutamine amidotransferase type-2 domain; it reads CGIVGYIGQA…NDQVVTITAD (227 aa). 2 SIS domains span residues 295 to 435 and 468 to 613; these read IDEA…LRGN and LGQD…VDQP. Lys-618 (for Fru-6P isomerization activity) is an active-site residue.

In terms of assembly, homodimer.

The protein resides in the cytoplasm. It carries out the reaction D-fructose 6-phosphate + L-glutamine = D-glucosamine 6-phosphate + L-glutamate. Catalyzes the first step in hexosamine metabolism, converting fructose-6P into glucosamine-6P using glutamine as a nitrogen source. The sequence is that of Glutamine--fructose-6-phosphate aminotransferase [isomerizing] from Corynebacterium glutamicum (strain ATCC 13032 / DSM 20300 / JCM 1318 / BCRC 11384 / CCUG 27702 / LMG 3730 / NBRC 12168 / NCIMB 10025 / NRRL B-2784 / 534).